We begin with the raw amino-acid sequence, 70 residues long: ATP synthase subunit c (70 aa).

The next 2 helical transmembrane spans lie at Ile4–Val24 and Phe47–Val67.

The protein belongs to the ATPase C chain family. F-type ATPases have 2 components, F(1) - the catalytic core - and F(0) - the membrane proton channel. F(1) has five subunits: alpha(3), beta(3), gamma(1), delta(1), epsilon(1). F(0) has three main subunits: a(1), b(2) and c(10-14). The alpha and beta chains form an alternating ring which encloses part of the gamma chain. F(1) is attached to F(0) by a central stalk formed by the gamma and epsilon chains, while a peripheral stalk is formed by the delta and b chains.

It is found in the cell membrane. F(1)F(0) ATP synthase produces ATP from ADP in the presence of a proton or sodium gradient. F-type ATPases consist of two structural domains, F(1) containing the extramembraneous catalytic core and F(0) containing the membrane proton channel, linked together by a central stalk and a peripheral stalk. During catalysis, ATP synthesis in the catalytic domain of F(1) is coupled via a rotary mechanism of the central stalk subunits to proton translocation. Its function is as follows. Key component of the F(0) channel; it plays a direct role in translocation across the membrane. A homomeric c-ring of between 10-14 subunits forms the central stalk rotor element with the F(1) delta and epsilon subunits. The protein is ATP synthase subunit c of Limosilactobacillus fermentum (strain NBRC 3956 / LMG 18251) (Lactobacillus fermentum).